A 265-amino-acid polypeptide reads, in one-letter code: Gap junction beta-4 protein (265 aa).

Residues 2-13 (NWGFLQGILSGV) lie within the membrane without spanning it. Residues 14 to 20 (NKYSTAL) are Cytoplasmic-facing. A helical transmembrane segment spans residues 21–40 (GRIWLSVVFIFRVLVYVVAA). Residues 41 to 73 (EEVWDDEQKDFICNTKQPGCPNVCYDEFFPVSH) lie on the Extracellular side of the membrane. Intrachain disulfides connect Cys53–Cys175, Cys60–Cys169, and Cys64–Cys164. Residues 74-94 (VRLWALQLILVTCPSLLVVMH) traverse the membrane as a helical segment. At 95-130 (VAYREERERKHRLKHGPDAPALYSNLSKKRGGLWWT) the chain is on the cytoplasmic side. The chain crosses the membrane as a helical span at residues 131 to 151 (YLLSLIFKAAVDSGFLYIFHC). The Extracellular portion of the chain corresponds to 152–184 (IYKDYDMPRVVACSVQPCPHTVDCYISRPTEKK). Residues 185 to 205 (VFTYFMVVTAAICILLNLSEV) form a helical membrane-spanning segment. Topologically, residues 206 to 265 (AYLVGKRCMEVFRPRRQKTSRRHQLPDTCPPYVISKGHPQDESTVLTKAGMATVDAGVYP) are cytoplasmic.

The protein belongs to the connexin family. Beta-type (group I) subfamily. In terms of assembly, a hemichannel or connexon is composed of a hexamer of connexins. A functional gap junction is formed by the apposition of two hemichannels. Forms heteromeric channels with GJB2. Detected in adult heart, kidney, skin and cochlea, where it is detected in spiral ganglion, stria vascularis, spiral limbus and spiral ligament (at protein level).

The protein resides in the cell membrane. It localises to the cell junction. The protein localises to the gap junction. Functionally, structural component of gap junctions. Gap junctions are dodecameric channels that connect the cytoplasm of adjoining cells. They are formed by the docking of two hexameric hemichannels, one from each cell membrane. Small molecules and ions diffuse from one cell to a neighboring cell via the central pore. In Rattus norvegicus (Rat), this protein is Gap junction beta-4 protein (Gjb4).